The primary structure comprises 368 residues: Glutamate 5-kinase (368 aa).

Position 9 (lysine 9) interacts with ATP. Substrate is bound by residues serine 49, aspartate 136, and asparagine 148. ATP contacts are provided by residues 168-169 (TD) and 210-216 (TGGMMTK). In terms of domain architecture, PUA spans 275–353 (AGIITIDNGA…ADIENVLGYE (79 aa)).

This sequence belongs to the glutamate 5-kinase family.

The protein resides in the cytoplasm. It carries out the reaction L-glutamate + ATP = L-glutamyl 5-phosphate + ADP. The protein operates within amino-acid biosynthesis; L-proline biosynthesis; L-glutamate 5-semialdehyde from L-glutamate: step 1/2. Its function is as follows. Catalyzes the transfer of a phosphate group to glutamate to form L-glutamate 5-phosphate. This chain is Glutamate 5-kinase, found in Haemophilus influenzae (strain PittGG).